Here is a 386-residue protein sequence, read N- to C-terminus: Phosphoglycerate kinase (386 aa).

Substrate-binding positions include 21-23 (DLN), Arg-36, 59-62 (HLGR), Arg-113, and Arg-146. Residues Lys-197, Glu-314, and 340–343 (GGDT) contribute to the ATP site.

Belongs to the phosphoglycerate kinase family. As to quaternary structure, monomer.

The protein resides in the cytoplasm. The catalysed reaction is (2R)-3-phosphoglycerate + ATP = (2R)-3-phospho-glyceroyl phosphate + ADP. Its pathway is carbohydrate degradation; glycolysis; pyruvate from D-glyceraldehyde 3-phosphate: step 2/5. The protein is Phosphoglycerate kinase of Ectopseudomonas mendocina (strain ymp) (Pseudomonas mendocina).